Consider the following 489-residue polypeptide: Mitochondrial-processing peptidase subunit beta (489 aa).

The transit peptide at 1-43 (MAAAAARVVLSSAARRRLWGFSESLLIRGAAGRSLYFGENRLR) directs the protein to the mitochondrion. Residue histidine 101 coordinates Zn(2+). The Proton acceptor role is filled by glutamate 104. Zn(2+) is bound by residues histidine 105 and glutamate 181.

The protein belongs to the peptidase M16 family. Heterodimer of PMPCA (alpha) and PMPCB (beta) subunits, forming the mitochondrial processing protease (MPP) in which PMPCA is involved in substrate recognition and binding and PMPCB is the catalytic subunit. Zn(2+) serves as cofactor.

Its subcellular location is the mitochondrion matrix. It catalyses the reaction Release of N-terminal transit peptides from precursor proteins imported into the mitochondrion, typically with Arg in position P2.. With respect to regulation, binding to PMPCA is required for catalytic activity. In terms of biological role, catalytic subunit of the essential mitochondrial processing protease (MPP), which cleaves the mitochondrial sequence off newly imported precursors proteins. Preferentially, cleaves after an arginine at position P2. Required for PINK1 turnover by coupling PINK1 mitochondrial import and cleavage, which results in subsequent PINK1 proteolysis. The sequence is that of Mitochondrial-processing peptidase subunit beta (PMPCB) from Homo sapiens (Human).